We begin with the raw amino-acid sequence, 581 residues long: Protein FAM83D (581 aa).

The interval 1–297 (MALRYDGLDE…LYAQSKPISS (297 aa)) is DUF1669. A disordered region spans residues 75 to 101 (PGEEGAAAGAEDSFGSSHDCSSGTYFP). The span at 88–98 (FGSSHDCSSGT) shows a compositional bias: polar residues. Serine 296 bears the Phosphoserine mark. The interval 338–581 (TPRKVELGGE…REIMLYPSYQ (244 aa)) is required for interaction with KIF22 and function in chromosome congression. 2 disordered regions span residues 366 to 401 (EDYF…MSDV) and 426 to 503 (QTVV…GPPK). Residues 369 to 382 (FSSRKDRLEGRRVT) are compositionally biased toward basic and acidic residues. The segment covering 426-438 (QTVVPTTSATTQT) has biased composition (low complexity). Residue serine 456 is modified to Phosphoserine. A compositionally biased stretch (low complexity) spans 462-488 (SVSRSSSLRSSSSLSSQGSVASSIGSQ). At threonine 507 the chain carries Phosphothreonine.

It belongs to the FAM83 family. In terms of assembly, interacts with FBXW7; promotes FBXW7 degradation. May interact with RAF1. Interacts with KIF22; recruits KIF22 to mitotic spindle microtubules. Interacts (via C-terminus) with DYNLL1. Interacts with HMMR. Directly interacts (via DUF1669) with CSNK1A1 and CSNK1A1L. In terms of processing, phosphorylated during mitosis.

The protein resides in the cytoplasm. It is found in the cytoskeleton. Its subcellular location is the spindle. The protein localises to the spindle pole. In terms of biological role, through the degradation of FBXW7, may act indirectly on the expression and downstream signaling of MTOR, JUN and MYC. May play also a role in cell proliferation through activation of the ERK1/ERK2 signaling cascade. May also be important for proper chromosome congression and alignment during mitosis through its interaction with KIF22. The chain is Protein FAM83D from Bos taurus (Bovine).